The primary structure comprises 118 residues: Basic phospholipase A2 4 (118 aa).

7 disulfide bridges follow: C11–C71, C27–C117, C29–C45, C44–C98, C51–C91, C60–C84, and C78–C89. Ca(2+) is bound by residues Y28, G30, and G32. H48 is a catalytic residue. D49 serves as a coordination point for Ca(2+). D92 is an active-site residue.

The protein belongs to the phospholipase A2 family. Group I subfamily. D49 sub-subfamily. As to quaternary structure, monomer. Requires Ca(2+) as cofactor. As to expression, expressed by the venom gland.

Its subcellular location is the secreted. It carries out the reaction a 1,2-diacyl-sn-glycero-3-phosphocholine + H2O = a 1-acyl-sn-glycero-3-phosphocholine + a fatty acid + H(+). In terms of biological role, PLA2 catalyzes the calcium-dependent hydrolysis of the 2-acyl groups in 3-sn-phosphoglycerides. The protein is Basic phospholipase A2 4 of Laticauda semifasciata (Black-banded sea krait).